A 272-amino-acid polypeptide reads, in one-letter code: Undecaprenyl-diphosphatase (272 aa).

The next 7 helical transmembrane spans lie at 42–62, 92–112, 120–140, 149–169, 194–214, 224–244, and 252–272; these read FGLS…VVFF, YLVL…EDFF, WVVV…EAVG, MGFA…VPGV, FLMS…EVLA, MFAV…RFFI, and LRAF…LLLL.

This sequence belongs to the UppP family.

The protein resides in the cell membrane. It catalyses the reaction di-trans,octa-cis-undecaprenyl diphosphate + H2O = di-trans,octa-cis-undecaprenyl phosphate + phosphate + H(+). In terms of biological role, catalyzes the dephosphorylation of undecaprenyl diphosphate (UPP). Confers resistance to bacitracin. The polypeptide is Undecaprenyl-diphosphatase (Rubrobacter xylanophilus (strain DSM 9941 / JCM 11954 / NBRC 16129 / PRD-1)).